The following is a 92-amino-acid chain: uncharacterized protein (92 aa).

One can recognise an HTH cro/C1-type domain in the interval 25 to 83 (LEEKLKQEKIDRKYLAQVTNIPYTTVSRIMRAEANREFNPEIDTILKIAKYFNCTMDEV). Residues 36 to 55 (RKYLAQVTNIPYTTVSRIMR) constitute a DNA-binding region (H-T-H motif).

This is an uncharacterized protein from Rickettsia prowazekii (strain Madrid E).